The primary structure comprises 614 residues: MATMKSLIGLINKIQRACTVLGDHGGEGMSLWEALPTVAVVGGQSSGKSSVLESVVGRDFLPRGSGIVTRRPLVLQLHKTEDGTTEYAEFLHAPKKRFADFAAVRKEIEDETDRITGKSKQISNIPIQLSIYSPNVVNLTLIDLPGLTKVAVDGQPESIVQDIENMVRSYVEKPNCIILAISPANQDIATSDAIKLAREVDPTGERTFGVATKLDIMDKGTDCLDVLEGRSYRLQHPWVGIVNRSQADINKRVDMIAARRKEQEYFETSPEYGHLASRMGSEYLAKLLSQHLETVIRQKIPSIVALINKSIDEINAELDRIGRPIAVDSGAQLYTILELCRAFDRVFKEHLDGGRPGGDRIYGVFDHQLPAALKKLPFDRHLSTKNVQKVVSEADGYQPHLIAPEQGYRRLIDGSISYFKGPAEATVDAVHFVLKELVRKSISETEELKRFPTLASDIAAAANEALERFRDESRKTVLRLVDMESSYLTVEFFRKLHLEPEKEKPNPRNAPAPNADPYSDNHFRKIGSNVSAYINMVCDTLRNSLPKAVVYCQVREAKRSLLNFFYAQVGRKEKEKLGAMLDEDPQLMERRGTLAKRLELYKQARDDIDAVAWK.

The 270-residue stretch at 32-301 (WEALPTVAVV…LETVIRQKIP (270 aa)) folds into the Dynamin-type G domain. The tract at residues 42–49 (GGQSSGKS) is G1 motif. 45 to 50 (SSGKSS) contacts GTP. The interval 68-70 (VTR) is G2 motif. Residues 143 to 146 (DLPG) form a G3 motif region. The tract at residues 212 to 215 (TKLD) is G4 motif. GTP is bound by residues 213–218 (KLDIMD) and 243–246 (NRSQ). The G5 motif stretch occupies residues 242-245 (VNRS). Positions 499–519 (EPEKEKPNPRNAPAPNADPYS) are disordered. Low complexity predominate over residues 507–517 (PRNAPAPNADP). The GED domain occupies 523 to 614 (FRKIGSNVSA…RDDIDAVAWK (92 aa)).

Belongs to the TRAFAC class dynamin-like GTPase superfamily. Dynamin/Fzo/YdjA family. Forms homodimer and may homooligomerize and heterooligomerize to form the phragmoplastin complex. Binds to PHIP1. In terms of tissue distribution, ubiquitous.

It is found in the cytoplasm. The protein localises to the cytoskeleton. It localises to the cell cortex. The protein resides in the cytoplasmic vesicle. Its subcellular location is the clathrin-coated vesicle. It is found in the phragmoplast. It carries out the reaction GTP + H2O = GDP + phosphate + H(+). Microtubule-associated force-producing protein that is targeted to the growing edges of the cell plate during cytokinesis. Also plays a major role in plasma membrane maintenance during pollen maturation. Has a GTPase activity. The protein is Phragmoplastin DRP1C of Arabidopsis thaliana (Mouse-ear cress).